Consider the following 217-residue polypeptide: Large ribosomal subunit protein uL1 (217 aa).

Belongs to the universal ribosomal protein uL1 family. Part of the 50S ribosomal subunit.

Functionally, binds directly to 23S rRNA. Probably involved in E site tRNA release. Its function is as follows. Protein L1 is also a translational repressor protein, it controls the translation of its operon by binding to its mRNA. In Hyperthermus butylicus (strain DSM 5456 / JCM 9403 / PLM1-5), this protein is Large ribosomal subunit protein uL1.